A 391-amino-acid polypeptide reads, in one-letter code: Sulfate adenylyltransferase (391 aa).

Belongs to the sulfate adenylyltransferase family.

The catalysed reaction is sulfate + ATP + H(+) = adenosine 5'-phosphosulfate + diphosphate. It participates in sulfur metabolism; hydrogen sulfide biosynthesis; sulfite from sulfate: step 1/3. This is Sulfate adenylyltransferase from Lactiplantibacillus plantarum (strain ATCC BAA-793 / NCIMB 8826 / WCFS1) (Lactobacillus plantarum).